We begin with the raw amino-acid sequence, 255 residues long: Cobalt-precorrin-6A reductase (255 aa).

The protein belongs to the precorrin-6x reductase family.

The catalysed reaction is Co-precorrin-6B + NAD(+) = Co-precorrin-6A + NADH + H(+). It participates in cofactor biosynthesis; adenosylcobalamin biosynthesis; cob(II)yrinate a,c-diamide from sirohydrochlorin (anaerobic route): step 7/10. Its function is as follows. Catalyzes the reduction of the macrocycle of cobalt-precorrin-6A to cobalt-precorrin-6B. The sequence is that of Cobalt-precorrin-6A reductase (cbiJ) from Priestia megaterium (Bacillus megaterium).